Here is a 566-residue protein sequence, read N- to C-terminus: Alpha-N-acetylgalactosaminide alpha-2,6-sialyltransferase 1 (566 aa).

The Cytoplasmic portion of the chain corresponds to 1–16 (MGFLIRRLPKDSRIFR). Residues 17–37 (WLLILTVFSFIITSFSALFGM) traverse the membrane as a helical; Signal-anchor for type II membrane protein segment. Residues 38 to 566 (EKSIFRQLKI…ENIMKLYQRS (529 aa)) are Lumenal-facing. Asparagine 66 and asparagine 132 each carry an N-linked (GlcNAc...) asparagine glycan. A disordered region spans residues 138-161 (ASVVERTKEKTTARPVPGVGEADG). Residue asparagine 192 is glycosylated (N-linked (GlcNAc...) asparagine). Repeat 1 spans residues 247–254 (SSSPVSTC). The tract at residues 247–337 (SSSPVSTCSE…ANSSSNVSTC (91 aa)) is 2 X 8 AA repeats of S-S-S-X-V-S-T-C. Intrachain disulfides connect cysteine 254–cysteine 337 and cysteine 340–cysteine 508. N-linked (GlcNAc...) asparagine glycosylation is found at asparagine 275, asparagine 286, asparagine 306, asparagine 329, and asparagine 333. Residues 330–337 (SSSNVSTC) form repeat 2.

The protein belongs to the glycosyltransferase 29 family. Heart, kidney, testes, brain, liver and lung.

It localises to the golgi apparatus membrane. The catalysed reaction is a beta-D-galactosyl-(1-&gt;3)-N-acetyl-alpha-D-galactosaminyl derivative + CMP-N-acetyl-beta-neuraminate = a beta-D-galactosyl-(1-&gt;3)-[N-acetyl-alpha-neuraminyl-(2-&gt;6)]-N-acetyl-alpha-D-galactosaminyl derivative + CMP + H(+). It carries out the reaction a 3-O-[N-acetyl-alpha-D-galactosaminyl]-L-seryl-[protein] + CMP-N-acetyl-beta-neuraminate = a 3-O-[N-acetyl-alpha-neuraminosyl-(2-&gt;6)-N-acetyl-alpha-D-galactosaminyl]-L-seryl-[protein] + CMP + H(+). It catalyses the reaction a 3-O-[N-acetyl-alpha-D-galactosaminyl]-L-threonyl-[protein] + CMP-N-acetyl-beta-neuraminate = a 3-O-[N-acetyl-alpha-neuraminosyl-(2-&gt;6)-N-acetyl-alpha-D-galactosaminyl]-L-threonyl-[protein] + CMP + H(+). The enzyme catalyses a 3-O-[beta-D-galactosyl-(1-&gt;3)-N-acetyl-alpha-D-galactosaminyl]-L-seryl-[protein] + CMP-N-acetyl-beta-neuraminate = a 3-O-{beta-D-galactosyl-(1-&gt;3)-[N-acetyl-alpha-neuraminosyl-(2-&gt;6)]-N-acetyl-alpha-D-galactosaminyl}-L-seryl-[protein] + CMP + H(+). The catalysed reaction is a 3-O-[beta-D-galactosyl-(1-&gt;3)-N-acetyl-alpha-D-galactosaminyl]-L-threonyl-[protein] + CMP-N-acetyl-beta-neuraminate = a 3-O-{beta-D-galactosyl-(1-&gt;3)-[N-acetyl-alpha-neuraminosyl-(2-&gt;6)]-N-acetyl-alpha-D-galactosaminyl}-L-threonyl-[protein] + CMP + H(+). It carries out the reaction a 3-O-[N-acetyl-alpha-neuraminyl-(2-&gt;3)-beta-D-galactosyl-(1-&gt;3)-N-acetyl-alpha-D-galactosaminyl]-L-threonyl-[protein] + CMP-N-acetyl-beta-neuraminate = a 3-O-{alpha-Neu5Ac-(2-&gt;3)-beta-D-Gal-(1-&gt;3)-[alpha-Neu5Ac-(2-&gt;6)]-alpha-D-GalNAc}-L-threonyl-[protein] + CMP + H(+). Its pathway is protein modification; protein glycosylation. In terms of biological role, protein sialyltransferase specifically expressed in goblet cells that plays a key role in intestinal host-commensal homeostasis. Conjugates sialic acid with an alpha-2-6 linkage to N-acetylgalactosamine (GalNAc) glycan chains linked to serine or threonine in glycoproteins. Generates sialylated T and Tn antigens.. The polypeptide is Alpha-N-acetylgalactosaminide alpha-2,6-sialyltransferase 1 (ST6GALNAC1) (Gallus gallus (Chicken)).